Consider the following 714-residue polypeptide: Fatty acid oxidation complex subunit alpha (714 aa).

Positions 1-190 (MDTVSAFKLE…KAGLVDEVVP (190 aa)) are enoyl-CoA hydratase. The tract at residues 306–714 (GSLRSVAVLG…TFWPADERLT (409 aa)) is 3-hydroxyacyl-CoA dehydrogenase.

It in the N-terminal section; belongs to the enoyl-CoA hydratase/isomerase family. In the central section; belongs to the 3-hydroxyacyl-CoA dehydrogenase family. In terms of assembly, heterotetramer of two alpha chains (FadJ) and two beta chains (FadI).

It is found in the cytoplasm. It catalyses the reaction a (3S)-3-hydroxyacyl-CoA = a (2E)-enoyl-CoA + H2O. The enzyme catalyses a 4-saturated-(3S)-3-hydroxyacyl-CoA = a (3E)-enoyl-CoA + H2O. The catalysed reaction is a (3S)-3-hydroxyacyl-CoA + NAD(+) = a 3-oxoacyl-CoA + NADH + H(+). It carries out the reaction (3S)-3-hydroxybutanoyl-CoA = (3R)-3-hydroxybutanoyl-CoA. It participates in lipid metabolism; fatty acid beta-oxidation. In terms of biological role, catalyzes the formation of a hydroxyacyl-CoA by addition of water on enoyl-CoA. Also exhibits 3-hydroxyacyl-CoA epimerase and 3-hydroxyacyl-CoA dehydrogenase activities. This is Fatty acid oxidation complex subunit alpha from Klebsiella pneumoniae subsp. pneumoniae (strain ATCC 700721 / MGH 78578).